Consider the following 139-residue polypeptide: Ribonuclease P protein component (139 aa).

Residues 116–139 (FSKNKSTIGGEYSPKNEQCESELP) form a disordered region.

It belongs to the RnpA family. In terms of assembly, consists of a catalytic RNA component (M1 or rnpB) and a protein subunit.

It catalyses the reaction Endonucleolytic cleavage of RNA, removing 5'-extranucleotides from tRNA precursor.. RNaseP catalyzes the removal of the 5'-leader sequence from pre-tRNA to produce the mature 5'-terminus. It can also cleave other RNA substrates such as 4.5S RNA. The protein component plays an auxiliary but essential role in vivo by binding to the 5'-leader sequence and broadening the substrate specificity of the ribozyme. The protein is Ribonuclease P protein component of Chlamydia abortus (strain DSM 27085 / S26/3) (Chlamydophila abortus).